A 612-amino-acid chain; its full sequence is Dihydroxy-acid dehydratase (612 aa).

Residue Asp81 coordinates Mg(2+). Cys122 provides a ligand contact to [2Fe-2S] cluster. Asp123 and Lys124 together coordinate Mg(2+). The residue at position 124 (Lys124) is an N6-carboxylysine. Cys196 lines the [2Fe-2S] cluster pocket. Residue Glu492 participates in Mg(2+) binding. The active-site Proton acceptor is the Ser518.

Belongs to the IlvD/Edd family. As to quaternary structure, homodimer. [2Fe-2S] cluster serves as cofactor. The cofactor is Mg(2+).

The enzyme catalyses (2R)-2,3-dihydroxy-3-methylbutanoate = 3-methyl-2-oxobutanoate + H2O. It carries out the reaction (2R,3R)-2,3-dihydroxy-3-methylpentanoate = (S)-3-methyl-2-oxopentanoate + H2O. It functions in the pathway amino-acid biosynthesis; L-isoleucine biosynthesis; L-isoleucine from 2-oxobutanoate: step 3/4. Its pathway is amino-acid biosynthesis; L-valine biosynthesis; L-valine from pyruvate: step 3/4. Functionally, functions in the biosynthesis of branched-chain amino acids. Catalyzes the dehydration of (2R,3R)-2,3-dihydroxy-3-methylpentanoate (2,3-dihydroxy-3-methylvalerate) into 2-oxo-3-methylpentanoate (2-oxo-3-methylvalerate) and of (2R)-2,3-dihydroxy-3-methylbutanoate (2,3-dihydroxyisovalerate) into 2-oxo-3-methylbutanoate (2-oxoisovalerate), the penultimate precursor to L-isoleucine and L-valine, respectively. This chain is Dihydroxy-acid dehydratase, found in Paracoccus denitrificans (strain Pd 1222).